We begin with the raw amino-acid sequence, 307 residues long: Ribonuclease HIII (307 aa).

The RNase H type-2 domain occupies 93-307 (MSVIGSDEVG…ANTQKAKKWL (215 aa)). Residues aspartate 99, glutamate 100, and aspartate 204 each contribute to the a divalent metal cation site.

Belongs to the RNase HII family. RnhC subfamily. Mn(2+) is required as a cofactor. It depends on Mg(2+) as a cofactor.

The protein resides in the cytoplasm. The catalysed reaction is Endonucleolytic cleavage to 5'-phosphomonoester.. Functionally, endonuclease that specifically degrades the RNA of RNA-DNA hybrids. This is Ribonuclease HIII from Bacillus pumilus (strain SAFR-032).